We begin with the raw amino-acid sequence, 96 residues long: uncharacterized protein (96 aa).

This is an uncharacterized protein from Bacillus subtilis (strain 168).